The primary structure comprises 492 residues: Glutamyl-tRNA(Gln) amidotransferase subunit A (492 aa).

Residues Lys-78 and Ser-158 each act as charge relay system in the active site. The active-site Acyl-ester intermediate is Ser-182.

It belongs to the amidase family. GatA subfamily. Heterotrimer of A, B and C subunits.

It carries out the reaction L-glutamyl-tRNA(Gln) + L-glutamine + ATP + H2O = L-glutaminyl-tRNA(Gln) + L-glutamate + ADP + phosphate + H(+). Functionally, allows the formation of correctly charged Gln-tRNA(Gln) through the transamidation of misacylated Glu-tRNA(Gln) in organisms which lack glutaminyl-tRNA synthetase. The reaction takes place in the presence of glutamine and ATP through an activated gamma-phospho-Glu-tRNA(Gln). This Rhodopseudomonas palustris (strain BisA53) protein is Glutamyl-tRNA(Gln) amidotransferase subunit A.